The primary structure comprises 140 residues: Holo-[acyl-carrier-protein] synthase (140 aa).

Mg(2+) contacts are provided by Asp8 and Glu62.

The protein belongs to the P-Pant transferase superfamily. AcpS family. Mg(2+) serves as cofactor.

Its subcellular location is the cytoplasm. It catalyses the reaction apo-[ACP] + CoA = holo-[ACP] + adenosine 3',5'-bisphosphate + H(+). Functionally, transfers the 4'-phosphopantetheine moiety from coenzyme A to a Ser of acyl-carrier-protein. In Cupriavidus taiwanensis (strain DSM 17343 / BCRC 17206 / CCUG 44338 / CIP 107171 / LMG 19424 / R1) (Ralstonia taiwanensis (strain LMG 19424)), this protein is Holo-[acyl-carrier-protein] synthase.